Consider the following 155-residue polypeptide: Transcription antitermination protein NusB (155 aa).

Belongs to the NusB family.

Involved in transcription antitermination. Required for transcription of ribosomal RNA (rRNA) genes. Binds specifically to the boxA antiterminator sequence of the ribosomal RNA (rrn) operons. The polypeptide is Transcription antitermination protein NusB (Ralstonia nicotianae (strain ATCC BAA-1114 / GMI1000) (Ralstonia solanacearum)).